The chain runs to 387 residues: Early growth response protein 3 (387 aa).

Positions 241–283 are disordered; the sequence is PGFGSLPQPPLTLKPIRPRKYPNRPSKTPLHERPHACPAEGCD. Over residues 269–283 the composition is skewed to basic and acidic residues; it reads PLHERPHACPAEGCD. C2H2-type zinc fingers lie at residues 275–299, 305–327, and 333–355; these read HACPAEGCDRRFSRSDELTRHLRIH, FQCRICMRSFSRSDHLTTHIRTH, and FACEFCGRKFARSDERKRHAKIH. The tract at residues 348–387 is disordered; that stretch reads RKRHAKIHLKQKEKKSEKGGAPSASSAPTVSLAPVVTTCA. Basic residues predominate over residues 350–360; the sequence is RHAKIHLKQKE.

The protein belongs to the EGR C2H2-type zinc-finger protein family.

Its subcellular location is the nucleus. Probable transcription factor involved in muscle spindle development. This is Early growth response protein 3 (Egr3) from Mus musculus (Mouse).